A 64-amino-acid chain; its full sequence is Large ribosomal subunit protein bL35 (64 aa).

Positions 17 to 41 (TGSGKVKRERMNGSHNLEHKNRKRT) are disordered. Residues 25-35 (ERMNGSHNLEH) show a composition bias toward basic and acidic residues.

This sequence belongs to the bacterial ribosomal protein bL35 family.

This chain is Large ribosomal subunit protein bL35, found in Chlorobaculum parvum (strain DSM 263 / NCIMB 8327) (Chlorobium vibrioforme subsp. thiosulfatophilum).